The following is a 299-amino-acid chain: tRNA dimethylallyltransferase (299 aa).

10–17 is a binding site for ATP; the sequence is GPTASGKS. 12–17 lines the substrate pocket; the sequence is TASGKS.

This sequence belongs to the IPP transferase family. As to quaternary structure, monomer. Requires Mg(2+) as cofactor.

It catalyses the reaction adenosine(37) in tRNA + dimethylallyl diphosphate = N(6)-dimethylallyladenosine(37) in tRNA + diphosphate. Its function is as follows. Catalyzes the transfer of a dimethylallyl group onto the adenine at position 37 in tRNAs that read codons beginning with uridine, leading to the formation of N6-(dimethylallyl)adenosine (i(6)A). The chain is tRNA dimethylallyltransferase from Malacoplasma penetrans (strain HF-2) (Mycoplasma penetrans).